We begin with the raw amino-acid sequence, 207 residues long: Proteasome subunit beta 1 (207 aa).

A propeptide spans 1–9 (MWALDKIKG) (removed in mature form; by autocatalysis). Residue threonine 10 is the Nucleophile of the active site.

It belongs to the peptidase T1B family. The 20S proteasome core is composed of 14 alpha and 14 beta subunits that assemble into four stacked heptameric rings, resulting in a barrel-shaped structure. The two inner rings, each composed of seven catalytic beta subunits, are sandwiched by two outer rings, each composed of seven alpha subunits. The catalytic chamber with the active sites is on the inside of the barrel. Has a gated structure, the ends of the cylinder being occluded by the N-termini of the alpha-subunits. Is capped at one or both ends by the proteasome regulatory ATPase, PAN.

Its subcellular location is the cytoplasm. It catalyses the reaction Cleavage of peptide bonds with very broad specificity.. The formation of the proteasomal ATPase PAN-20S proteasome complex, via the docking of the C-termini of PAN into the intersubunit pockets in the alpha-rings, triggers opening of the gate for substrate entry. Interconversion between the open-gate and close-gate conformations leads to a dynamic regulation of the 20S proteasome proteolysis activity. Functionally, component of the proteasome core, a large protease complex with broad specificity involved in protein degradation. The sequence is that of Proteasome subunit beta 1 from Thermococcus sibiricus (strain DSM 12597 / MM 739).